The primary structure comprises 346 residues: Sensor protein kinase GraS (346 aa).

2 helical membrane passes run 18-38 and 43-63; these read IFWILFLNILMLGISLIDYDF and LFYIVSLNLSLTLIFLILTFF. The region spanning 126–332 is the Histidine kinase domain; that stretch reads EFVHDIKTPV…TVKLIFPLQN (207 aa).

As to quaternary structure, interacts with GraX.

Its subcellular location is the cell membrane. The enzyme catalyses ATP + protein L-histidine = ADP + protein N-phospho-L-histidine.. In terms of biological role, member of the two-component regulatory system GraR/GraS involved in resistance against cationic antimicrobial peptides (CAMPs). Functions as a sensor protein kinase which phosphorylates GraR through the auxiliary protein GraX. In turn, GraR up-regulates many genes such as adhesins, exoproteins, transporters, toxins, and proteins involved in cell wall synthesis. Down-regulates the expression of many genes involved in RNA and amino acid synthesis or glycolysis. This chain is Sensor protein kinase GraS (graS), found in Staphylococcus aureus (strain MRSA252).